A 368-amino-acid chain; its full sequence is MSILEKVQPIETMLPERYHKMSKEDMEKRVHEIKEKMGKMLFIPGHHYQKDEVVQFSDAAGDSLQLAQVAASNKDAKYIVFCGVHFMAETADMLTTDDQIVILPDMRAGCSMADMADIEQTERAWKELTKLFGDTMIPLTYVNSTAAIKAFCGRNGGATVTSSNAKQMVSWAFTQKERLVFLPDQHLGRNTAYDLGIPLDKMAVWDPHTDSLEYDGDIEEIQVILWKGHCSVHQNFTVKNIENVRKNHPDMNIIVHPECCYEVVAASDYAGSTKYIIDMIESAPSGSKWAIGTEMNLVNRIIQQHPDKEIVSLNPFMCPCLTMNRIDLPHLLWALETIERGEEINVISVDKQVTAEAVLALNRMLERV.

Iminosuccinate contacts are provided by H46 and S63. A [4Fe-4S] cluster-binding site is contributed by C110. Iminosuccinate is bound by residues 141–143 and S162; that span reads YVN. [4Fe-4S] cluster is bound at residue C230. Residues 256–258 and T273 each bind iminosuccinate; that span reads HPE. Residue C320 coordinates [4Fe-4S] cluster.

Belongs to the quinolinate synthase family. Type 3 subfamily. Requires [4Fe-4S] cluster as cofactor.

The protein resides in the cytoplasm. The catalysed reaction is iminosuccinate + dihydroxyacetone phosphate = quinolinate + phosphate + 2 H2O + H(+). The protein operates within cofactor biosynthesis; NAD(+) biosynthesis; quinolinate from iminoaspartate: step 1/1. In terms of biological role, catalyzes the condensation of iminoaspartate with dihydroxyacetone phosphate to form quinolinate. This chain is Quinolinate synthase, found in Bacillus cereus (strain G9842).